The primary structure comprises 127 residues: MNKTGIAHIYASQNNTIILVTDPTGAETIAKSSGGMVVKNDRDEASPYAAMRAADMVSEKLREREITDLIIRVRAPGGSKSKIPGPGAQSAIRALSRAGFKILRIEEVTPIPHDGTKKKGGRRGRRV.

It belongs to the universal ribosomal protein uS11 family. As to quaternary structure, part of the 30S ribosomal subunit.

In terms of biological role, located on the platform of the 30S subunit. This chain is Small ribosomal subunit protein uS11, found in Picrophilus torridus (strain ATCC 700027 / DSM 9790 / JCM 10055 / NBRC 100828 / KAW 2/3).